Consider the following 382-residue polypeptide: Farnesyl diphosphate synthase (382 aa).

Isopentenyl diphosphate-binding residues include K81, R84, and Q120. The Mg(2+) site is built by D127 and D131. R136 provides a ligand contact to dimethylallyl diphosphate. R137 lines the isopentenyl diphosphate pocket. Positions 230, 231, 270, 287, and 296 each coordinate dimethylallyl diphosphate.

This sequence belongs to the FPP/GGPP synthase family. It depends on Mg(2+) as a cofactor.

It is found in the cytoplasm. The catalysed reaction is isopentenyl diphosphate + dimethylallyl diphosphate = (2E)-geranyl diphosphate + diphosphate. It carries out the reaction isopentenyl diphosphate + (2E)-geranyl diphosphate = (2E,6E)-farnesyl diphosphate + diphosphate. It functions in the pathway isoprenoid biosynthesis; farnesyl diphosphate biosynthesis; farnesyl diphosphate from geranyl diphosphate and isopentenyl diphosphate: step 1/1. It participates in isoprenoid biosynthesis; geranyl diphosphate biosynthesis; geranyl diphosphate from dimethylallyl diphosphate and isopentenyl diphosphate: step 1/1. With respect to regulation, inhibited by aminobisphosphonate drugs (aBP), such as risedronate and alendronate. Functionally, key enzyme in isoprenoid biosynthesis which catalyzes the formation of farnesyl diphosphate (FPP), a sterol precursor. Involved in the inhibition of cell growth. In Dictyostelium discoideum (Social amoeba), this protein is Farnesyl diphosphate synthase (fps).